Consider the following 603-residue polypeptide: Elongation factor 4 (603 aa).

One can recognise a tr-type G domain in the interval 7-189; that stretch reads SRIRNFSIIA…SIVHLVPPPQ (183 aa). Residues 19–24 and 136–139 contribute to the GTP site; these read DHGKST and NKID.

This sequence belongs to the TRAFAC class translation factor GTPase superfamily. Classic translation factor GTPase family. LepA subfamily.

It localises to the cell inner membrane. The catalysed reaction is GTP + H2O = GDP + phosphate + H(+). Required for accurate and efficient protein synthesis under certain stress conditions. May act as a fidelity factor of the translation reaction, by catalyzing a one-codon backward translocation of tRNAs on improperly translocated ribosomes. Back-translocation proceeds from a post-translocation (POST) complex to a pre-translocation (PRE) complex, thus giving elongation factor G a second chance to translocate the tRNAs correctly. Binds to ribosomes in a GTP-dependent manner. The chain is Elongation factor 4 from Rippkaea orientalis (strain PCC 8801 / RF-1) (Cyanothece sp. (strain PCC 8801)).